The primary structure comprises 269 residues: Tryptophan synthase alpha chain (269 aa).

Active-site proton acceptor residues include Glu-49 and Asp-60.

The protein belongs to the TrpA family. Tetramer of two alpha and two beta chains.

The catalysed reaction is (1S,2R)-1-C-(indol-3-yl)glycerol 3-phosphate + L-serine = D-glyceraldehyde 3-phosphate + L-tryptophan + H2O. It functions in the pathway amino-acid biosynthesis; L-tryptophan biosynthesis; L-tryptophan from chorismate: step 5/5. Functionally, the alpha subunit is responsible for the aldol cleavage of indoleglycerol phosphate to indole and glyceraldehyde 3-phosphate. The protein is Tryptophan synthase alpha chain of Actinobacillus succinogenes (strain ATCC 55618 / DSM 22257 / CCUG 43843 / 130Z).